The sequence spans 101 residues: Growth-regulated alpha protein (101 aa).

A signal peptide spans 1–28; that stretch reads MAPATRSLLRAPLLLLLLLLATSRLATG. 2 disulfide bridges follow: Cys-37-Cys-63 and Cys-39-Cys-79.

Belongs to the intercrine alpha (chemokine CxC) family.

It is found in the secreted. Functionally, has chemotactic activity for neutrophils. The polypeptide is Growth-regulated alpha protein (CXCL1) (Cricetulus griseus (Chinese hamster)).